A 92-amino-acid chain; its full sequence is PqqA binding protein (92 aa).

It belongs to the PqqD family. In terms of assembly, monomer. Interacts with PqqE.

It participates in cofactor biosynthesis; pyrroloquinoline quinone biosynthesis. Functionally, functions as a PqqA binding protein and presents PqqA to PqqE, in the pyrroloquinoline quinone (PQQ) biosynthetic pathway. The chain is PqqA binding protein from Xanthomonas euvesicatoria pv. vesicatoria (strain 85-10) (Xanthomonas campestris pv. vesicatoria).